The primary structure comprises 642 residues: Influenza virus NS1A-binding protein homolog (642 aa).

The region spanning 32–99 (CDVRLQVCGH…AYTAQLKADK (68 aa)) is the BTB domain. The BACK domain maps to 134 to 233 (CISYRNFASC…YYSADHKLLD (100 aa)). A phosphoserine mark is found at Ser246, Ser277, Ser322, Ser336, and Ser338. A disordered region spans residues 257 to 281 (KPPRENGHKQISGSSTGCLSSPNAS). A compositionally biased stretch (polar residues) spans 265–281 (KQISGSSTGCLSSPNAS). 6 Kelch repeats span residues 369–415 (KLIA…VLMG), 416–463 (QLYV…ALNG), 465–512 (LYIV…ELGG), 513–559 (YLYI…VLDG), 561–606 (LFVG…TVGN), and 608–642 (IYAVGGFDGNEFLNTVEVYNPQSNEWSPYTKIFQF).

It belongs to the BTB-kelch protein family. As to quaternary structure, homodimer; through the BTB domain. Interacts with AHR/Aryl hydrocarbon receptor. Interacts (via BACK domain) with pre-mRNA-binding protein HNRNPK; the interaction is direct. Interacts (via BACK domain) with splicing factor PTBP1; the interaction is direct. Interacts (via Kelch repeats) with RNA polymerase POLR2A (via C-terminal domain). Interacts (via BACK domain) with splicing factor SNRPA; the interaction is indirect. Interacts (via Kelch repeats) with splicing factor SART1. Interacts (via BACK domain) with ALYREF; the interaction is indirect and likely plays a role in mRNA nuclear export. Interacts (via Kelch repeats) with KLHL20 (via Kelch repeats); this interaction blocks the assembly of Cul3-KLHL20 complex. In terms of tissue distribution, ubiquitous expression. In the heart, the highest expression is detected in the ventricles and the lowest in the atria. Expressed in dendrites and spines in neurons.

Its subcellular location is the cytoplasm. The protein localises to the cytoskeleton. It localises to the nucleus. Its function is as follows. Involved in many cell functions, including pre-mRNA splicing, the aryl hydrocarbon receptor (AHR) pathway, F-actin organization and protein ubiquitination. Plays a role in the dynamic organization of the actin skeleton as a stabilizer of actin filaments by association with F-actin through Kelch repeats. Protects cells from cell death induced by actin destabilization. Functions as a modifier of the AHR/Aryl hydrocarbon receptor pathway increasing the concentration of AHR available to activate transcription. In addition, functions as a negative regulator of BCR(KLHL20) E3 ubiquitin ligase complex to prevent ubiquitin-mediated proteolysis of PML and DAPK1, two tumor suppressors. Inhibits pre-mRNA splicing (in vitro). May play a role in mRNA nuclear export. May play a role in cell cycle progression in the nucleus. This is Influenza virus NS1A-binding protein homolog from Mus musculus (Mouse).